The following is a 291-amino-acid chain: Protein US2 (291 aa).

Glycine 2 carries the post-translational modification N-acetylglycine; by host; partial. A disordered region spans residues 251-270; the sequence is PEVPDEQPTSPGRGPQETDP.

This sequence belongs to the herpesviridae HHV-1 US2 protein family. Interacts with host KRT18.

The protein localises to the host cytoplasm. It is found in the host nucleus. The polypeptide is Protein US2 (Homo sapiens (Human)).